A 153-amino-acid polypeptide reads, in one-letter code: Cytochrome c-type biogenesis protein CcmE (153 aa).

The Cytoplasmic portion of the chain corresponds to 1–8; that stretch reads MMTPRQRR. The chain crosses the membrane as a helical; Signal-anchor for type II membrane protein span at residues 9–29; the sequence is MTWVALMVAGVSLAAFFALTA. The Periplasmic segment spans residues 30–153; the sequence is FQKNLLYFYT…PADYSEYRKK (124 aa). The heme site is built by His124 and Tyr128. The segment at 134-153 is disordered; sequence AESLKKNGGLPADYSEYRKK.

This sequence belongs to the CcmE/CycJ family.

The protein resides in the cell inner membrane. Its function is as follows. Heme chaperone required for the biogenesis of c-type cytochromes. Transiently binds heme delivered by CcmC and transfers the heme to apo-cytochromes in a process facilitated by CcmF and CcmH. The chain is Cytochrome c-type biogenesis protein CcmE from Methylococcus capsulatus (strain ATCC 33009 / NCIMB 11132 / Bath).